We begin with the raw amino-acid sequence, 1244 residues long: Mitotic chromosome and X-chromosome-associated protein mix-1 (1244 aa).

32–39 (GYNGSGKS) contributes to the ATP binding site. Positions 247-355 (VKKSAKEIED…AKRKEHEDSK (109 aa)) form a coiled coil. Over residues 337–355 (LSKDREVLDAKRKEHEDSK) the composition is skewed to basic and acidic residues. The tract at residues 337 to 369 (LSKDREVLDAKRKEHEDSKAANSKDIQSQSDDE) is disordered. Polar residues predominate over residues 356–365 (AANSKDIQSQ). A coiled-coil region spans residues 415-472 (ITAAKKRGERLHNQIKHLEGEKATLSARSKSDIGSADNYQKEVDEINKQLQLLGFNID). The region spanning 526 to 654 (DVFGYVAHLI…DSLDVAREIA (129 aa)) is the SMC hinge domain. Coiled coils occupy residues 701-946 (PQIE…RKEA) and 975-1037 (YTVS…IATL). Residues 919-932 (AKTKSKREEKEKEL) show a composition bias toward basic and acidic residues. The disordered stretch occupies residues 919–943 (AKTKSKREEKEKELTSLQQSEASNR). The span at 1216–1232 (DAAAKKGAQKNDKEPPK) shows a compositional bias: basic and acidic residues. The disordered stretch occupies residues 1216-1244 (DAAAKKGAQKNDKEPPKKKPIVVDDDDFE).

It belongs to the SMC family. SMC2 subfamily. As to quaternary structure, component of the condensin I complex, which contains the mix-1/SMC2 and smc-4/SMC4 heterodimer, and three non SMC subunits that probably regulate the complex: dpy-26, capg-1 and dpy-28. Within the complex, interacts with smc-4, dpy-26, dpy-28 and capg-1. Interaction with smc-4 is required for mitotic chromosome localization. Component of the condensin II complex, which contains the mix-1/SMC2 and smc-4/SMC4 heterodimer, and three non SMC subunits, capg-2, kle-2 and hcp-6 that probably regulate the complex. Within the complex, interacts with smc-4, capg-2, kle-2 and hcp-6. Also a component of the condensin-like dosage compensation complex, which contains the mix-1/SMC2 and dpy-27/SMC4 heterodimer, and three non SMC subunits that probably regulate the complex: dpy-26, capg-1 and dpy-28. Within the complex, interacts with dpy-27, dpy-26, capg-1 and dpy-28. Requires capg-1 for hermaphrodite X chromosome localization. Interacts with smcl-1. Expressed in embryos and in adult somatic and germline tissues (at protein level).

The protein resides in the nucleus. Its subcellular location is the chromosome. Its function is as follows. Essential protein required for both chromosome condensation and segregation and X-chromosome dosage compensation depending on its binding partners. Central component of the condensin I complex, a complex required for conversion of interphase chromatin into mitotic-like condense chromosomes. The condensin complex introduces positive supercoils into relaxed DNA in the presence of type I topoisomerases. Converts nicked DNA into positive knotted forms in the presence of type II topoisomerases. Central component of the condensin II complex, a complex that seems to play a role in prophase chromosome condensation and organization. Both the condensin complex I and II play a role in meiotic and mitotic chromosome segregation. Plays a role in robust cytokinesis upon the presence of chromatin obstructions. Also a member of the condensin I-like dosage compensation complex that associates specifically with hermaphrodite X chromosomes to reduce their gene transcription during interphase. This Caenorhabditis elegans protein is Mitotic chromosome and X-chromosome-associated protein mix-1 (mix-1).